Here is a 242-residue protein sequence, read N- to C-terminus: Ribonuclease PH (242 aa).

Phosphate-binding positions include Arg-89 and 127–129 (GTR).

It belongs to the RNase PH family. In terms of assembly, homohexameric ring arranged as a trimer of dimers.

It carries out the reaction tRNA(n+1) + phosphate = tRNA(n) + a ribonucleoside 5'-diphosphate. In terms of biological role, phosphorolytic 3'-5' exoribonuclease that plays an important role in tRNA 3'-end maturation. Removes nucleotide residues following the 3'-CCA terminus of tRNAs; can also add nucleotides to the ends of RNA molecules by using nucleoside diphosphates as substrates, but this may not be physiologically important. Probably plays a role in initiation of 16S rRNA degradation (leading to ribosome degradation) during starvation. The protein is Ribonuclease PH of Neisseria gonorrhoeae (strain ATCC 700825 / FA 1090).